We begin with the raw amino-acid sequence, 46 residues long: Probable butyrate kinase (46 aa).

Belongs to the acetokinase family.

Its subcellular location is the cytoplasm. The catalysed reaction is butanoate + ATP = butanoyl phosphate + ADP. This is Probable butyrate kinase (buk) from Geobacillus stearothermophilus (Bacillus stearothermophilus).